The sequence spans 353 residues: Photosystem II D2 protein (353 aa).

Thr-2 carries the N-acetylthreonine modification. Thr-2 is subject to Phosphothreonine. The chain crosses the membrane as a helical span at residues 41-61 (CAYFALGGWFTGTTFVTSWYT). His-118 lines the chlorophyll a pocket. The helical transmembrane segment at 125–141 (GFMLRQFELARSVQLRP) threads the bilayer. Gln-130 and Asn-143 together coordinate pheophytin a. The chain crosses the membrane as a helical span at residues 153 to 166 (VFVSVFLIYPLGQS). His-198 contacts chlorophyll a. Residues 208 to 228 (AALLCAIHGATVENTLFEDGD) form a helical membrane-spanning segment. A plastoquinone contacts are provided by His-215 and Phe-262. Fe cation is bound at residue His-215. His-269 contributes to the Fe cation binding site. The chain crosses the membrane as a helical span at residues 279-295 (GSWMSAIGVVGLALNLR).

This sequence belongs to the reaction center PufL/M/PsbA/D family. PSII is composed of 1 copy each of membrane proteins PsbA, PsbB, PsbC, PsbD, PsbE, PsbF, PsbH, PsbI, PsbJ, PsbK, PsbL, PsbM, PsbT, PsbX, PsbY, PsbZ, Psb30/Ycf12, at least 3 peripheral proteins of the oxygen-evolving complex and a large number of cofactors. It forms dimeric complexes. The D1/D2 heterodimer binds P680, chlorophylls that are the primary electron donor of PSII, and subsequent electron acceptors. It shares a non-heme iron and each subunit binds pheophytin, quinone, additional chlorophylls, carotenoids and lipids. There is also a Cl(-1) ion associated with D1 and D2, which is required for oxygen evolution. The PSII complex binds additional chlorophylls, carotenoids and specific lipids. is required as a cofactor.

The protein resides in the plastid. The protein localises to the chloroplast thylakoid membrane. It catalyses the reaction 2 a plastoquinone + 4 hnu + 2 H2O = 2 a plastoquinol + O2. In terms of biological role, photosystem II (PSII) is a light-driven water:plastoquinone oxidoreductase that uses light energy to abstract electrons from H(2)O, generating O(2) and a proton gradient subsequently used for ATP formation. It consists of a core antenna complex that captures photons, and an electron transfer chain that converts photonic excitation into a charge separation. The D1/D2 (PsbA/PsbD) reaction center heterodimer binds P680, the primary electron donor of PSII as well as several subsequent electron acceptors. D2 is needed for assembly of a stable PSII complex. In Pinus koraiensis (Korean pine), this protein is Photosystem II D2 protein.